The following is a 194-amino-acid chain: Ion-translocating oxidoreductase complex subunit B (194 aa).

A hydrophobic region spans residues 1-26 (MSSILIAVIAISALALVFGLILGFAS). One can recognise a 4Fe-4S domain in the interval 32-90 (ESDPIVDQIDSILPQTQCGQCGYPGCKPYAEAIANGDTINKCPPGGQATIEKLADLMGV). Cys49, Cys52, Cys57, Cys73, Cys114, Cys117, Cys120, Cys124, Cys144, Cys147, Cys150, and Cys154 together coordinate [4Fe-4S] cluster. 4Fe-4S ferredoxin-type domains follow at residues 105-134 (KIAF…GGTK) and 135-164 (ALHT…MIPV).

The protein belongs to the 4Fe4S bacterial-type ferredoxin family. RnfB subfamily. In terms of assembly, the complex is composed of six subunits: RnfA, RnfB, RnfC, RnfD, RnfE and RnfG. [4Fe-4S] cluster serves as cofactor.

It is found in the cell inner membrane. Part of a membrane-bound complex that couples electron transfer with translocation of ions across the membrane. The polypeptide is Ion-translocating oxidoreductase complex subunit B (Aliivibrio salmonicida (strain LFI1238) (Vibrio salmonicida (strain LFI1238))).